The following is a 120-amino-acid chain: Large ribosomal subunit protein uL18c (120 aa).

This sequence belongs to the universal ribosomal protein uL18 family. In terms of assembly, part of the 50S ribosomal subunit; contacts the 5S rRNA.

The protein resides in the plastid. Its subcellular location is the chloroplast. Its function is as follows. Binds 5S rRNA, forms part of the central protuberance of the 50S subunit. This chain is Large ribosomal subunit protein uL18c (rpl18), found in Porphyra purpurea (Red seaweed).